The primary structure comprises 503 residues: GMP synthase [glutamine-hydrolyzing] (503 aa).

The region spanning 3-189 (PVLVVDFGSQ…AFLSSFAAPN (187 aa)) is the Glutamine amidotransferase type-1 domain. The active-site Nucleophile is Cys-80. Catalysis depends on residues His-165 and Glu-167. Positions 190-380 (WDPEQTICGT…LGIPKHIVHR (191 aa)) constitute a GMPS ATP-PPase domain. Residue 217–223 (SGGVDSV) participates in ATP binding.

As to quaternary structure, homodimer.

It catalyses the reaction XMP + L-glutamine + ATP + H2O = GMP + L-glutamate + AMP + diphosphate + 2 H(+). It functions in the pathway purine metabolism; GMP biosynthesis; GMP from XMP (L-Gln route): step 1/1. Functionally, catalyzes the synthesis of GMP from XMP. This is GMP synthase [glutamine-hydrolyzing] from Tropheryma whipplei (strain Twist) (Whipple's bacillus).